Here is a 379-residue protein sequence, read N- to C-terminus: Cytochrome b (379 aa).

4 helical membrane-spanning segments follow: residues 33–53 (FGSLLGICLILQILTGLFLAM), 77–98 (WMIRYMHANGASLFFICLFMHV), 113–133 (WNIGILLLLTVMATAFMGYVL), and 178–198 (FFAFHFILPFIISALAAVHLL). Heme b-binding residues include H83 and H97. The heme b site is built by H182 and H196. A ubiquinone is bound at residue H201. The next 4 membrane-spanning stretches (helical) occupy residues 226 to 246 (IKDILGLLFLILALMLLVLFS), 288 to 308 (LGGVLPHAMSILILPIIPMLH), 320 to 340 (LSQCMFWLLVADLPILTWIGG), and 347 to 367 (FITIGQLASVYISSILLXLMP).

It belongs to the cytochrome b family. As to quaternary structure, the cytochrome bc1 complex contains 11 subunits: 3 respiratory subunits (MT-CYB, CYC1 and UQCRFS1), 2 core proteins (UQCRC1 and UQCRC2) and 6 low-molecular weight proteins (UQCRH/QCR6, UQCRB/QCR7, UQCRQ/QCR8, UQCR10/QCR9, UQCR11/QCR10 and a cleavage product of UQCRFS1). This cytochrome bc1 complex then forms a dimer. The cofactor is heme b.

The protein localises to the mitochondrion inner membrane. In terms of biological role, component of the ubiquinol-cytochrome c reductase complex (complex III or cytochrome b-c1 complex) that is part of the mitochondrial respiratory chain. The b-c1 complex mediates electron transfer from ubiquinol to cytochrome c. Contributes to the generation of a proton gradient across the mitochondrial membrane that is then used for ATP synthesis. In Chrotogale owstoni (Owston's palm civet), this protein is Cytochrome b (MT-CYB).